Reading from the N-terminus, the 363-residue chain is MVKVGVNGFGRIGRLVTRAAFNSGKVDIVAINDPFIDLNYMVYMFKYDSTHGKFKVDIVAINDPFIDLNYMVYMFKYDSTHGKFKGTVKAENGKLVINGHAITIFQERDPSKIKWGDAGAEYVVESTGVFTTMEKAGAHLKGGAKRVIISAPSRDAPMFVMGVNHEKYDKSLKIVSNASCTTNCLAPLAKVIHDNFGIVEGLMTTVHAITATQKTVDGPSAKLWRDGAGAAQNIIPASTGAAKAVGKVIPELNGKLTGMAFRVPTANVSVVDLTCRLEKPAKYDDIKRVVKQACDGPLKGMLGYTEHQVVSSDFNGDSHSSTFDAGAGIALNDHFVKLVSWYDNEFGYSNRVVDLMVHMASKE.

The segment at 1–176 is interaction with WARS; it reads MVKVGVNGFG…KYDKSLKIVS (176 aa). Position 3 is an N6,N6-dimethyllysine (Lys3). The residue at position 7 (Asn7) is a Deamidated asparagine. NAD(+) contacts are provided by residues 11 to 12 and Asp33; that span reads RI. Phosphotyrosine is present on Tyr70. At Lys89 the chain carries N6-acetyllysine. Asn92 bears the Deamidated asparagine mark. Position 94 is an N6,N6-dimethyllysine (Lys94). At Asn98 the chain carries Deamidated asparagine. Thr103 bears the Phosphothreonine mark. NAD(+) is bound by residues Arg108 and Ser150. Phosphoserine is present on residues Ser150 and Ser176. Residue Asn177 is modified to Deamidated asparagine. Ser179 carries the phosphoserine modification. D-glyceraldehyde 3-phosphate is bound at residue 179–181; it reads SCT. Cys180 (nucleophile) is an active-site residue. Position 180 is an ADP-ribosylcysteine; by autocatalysis; in irreversibly inhibited form (Cys180). The residue at position 180 (Cys180) is a Cysteine persulfide. An S-(2-succinyl)cysteine modification is found at Cys180. Cys180 is subject to S-nitrosocysteine; in reversibly inhibited form. Thr181 carries the phosphothreonine modification. At Asn183 the chain carries Deamidated asparagine. Phosphothreonine occurs at positions 205, 210, and 212. Residue Thr210 participates in D-glyceraldehyde 3-phosphate binding. Lys214 is covalently cross-linked (Glycyl lysine isopeptide (Lys-Gly) (interchain with G-Cter in SUMO2)). Position 222 is an N6,N6-dimethyllysine; alternate (Lys222). Lys222 is subject to N6-acetyllysine; alternate. An N6-malonyllysine; alternate modification is found at Lys222. Residue Thr239 is modified to Phosphothreonine. 239 to 240 is a binding site for D-glyceraldehyde 3-phosphate; that stretch reads TG. An N6,N6-dimethyllysine; alternate modification is found at Lys243. An N6-malonyllysine; alternate modification is found at Lys243. An N6-acetyllysine modification is found at Lys247. Asn253 carries the deamidated asparagine modification. Position 255 is an N6,N6-dimethyllysine; alternate (Lys255). Residue Lys255 is modified to N6-acetyllysine; alternate. Thr257 is modified (phosphothreonine). Arg262 is a D-glyceraldehyde 3-phosphate binding site. Thr265 bears the Phosphothreonine mark. Ser269 is modified (phosphoserine). Cys275 carries the post-translational modification S-(2-succinyl)cysteine. Cys275 bears the S-nitrosocysteine mark. Position 282 is an N6-acetyllysine (Lys282). Lys291 carries the post-translational modification N6,N6-dimethyllysine. Ser340 is modified (phosphoserine). The residue at position 344 (Asn344) is a Deamidated asparagine. Asn344 contacts NAD(+). Position 361 is a phosphoserine (Ser361). Lys362 carries the N6,N6-dimethyllysine modification.

The protein belongs to the glyceraldehyde-3-phosphate dehydrogenase family. Homotetramer. Interacts with TPPP; the interaction is direct. Interacts (when S-nitrosylated) with SIAH1; leading to nuclear translocation. Interacts with RILPL1/GOSPEL, leading to prevent the interaction between GAPDH and SIAH1 and prevent nuclear translocation. Interacts with CHP1; the interaction increases the binding of CHP1 with microtubules. Associates with microtubules. Interacts with EIF1AD, USP25, PRKCI and WARS1. Interacts with phosphorylated RPL13A; inhibited by oxidatively-modified low-densitity lipoprotein (LDL(ox)). Component of the GAIT complex. Interacts with FKBP6; leading to inhibit GAPDH catalytic activity. Interacts with TRAF2, promoting TRAF2 ubiquitination. Interacts with TRAF3, promoting TRAF3 ubiquitination. Post-translationally, ISGylated. In terms of processing, S-nitrosylation of Cys-180 leads to interaction with SIAH1, followed by translocation to the nucleus S-nitrosylation of Cys-275 is induced by interferon-gamma and LDL(ox) implicating the iNOS-S100A8/9 transnitrosylase complex and seems to prevent interaction with phosphorylated RPL13A and to interfere with GAIT complex activity. Sulfhydration at Cys-180 increases catalytic activity.

Its subcellular location is the cytoplasm. It is found in the cytosol. It localises to the cytoskeleton. The protein resides in the nucleus. The enzyme catalyses D-glyceraldehyde 3-phosphate + phosphate + NAD(+) = (2R)-3-phospho-glyceroyl phosphate + NADH + H(+). It catalyses the reaction S-nitroso-L-cysteinyl-[GAPDH] + L-cysteinyl-[protein] = L-cysteinyl-[GAPDH] + S-nitroso-L-cysteinyl-[protein]. The protein operates within carbohydrate degradation; glycolysis; pyruvate from D-glyceraldehyde 3-phosphate: step 1/5. With respect to regulation, glyceraldehyde-3-phosphate dehydrogenase activity is inhibited by fumarate, via the formation of S-(2-succinyl)cysteine residues. Functionally, has both glyceraldehyde-3-phosphate dehydrogenase and nitrosylase activities, thereby playing a role in glycolysis and nuclear functions, respectively. Glyceraldehyde-3-phosphate dehydrogenase is a key enzyme in glycolysis that catalyzes the first step of the pathway by converting D-glyceraldehyde 3-phosphate (G3P) into 3-phospho-D-glyceroyl phosphate. Modulates the organization and assembly of the cytoskeleton. Facilitates the CHP1-dependent microtubule and membrane associations through its ability to stimulate the binding of CHP1 to microtubules. Component of the GAIT (gamma interferon-activated inhibitor of translation) complex which mediates interferon-gamma-induced transcript-selective translation inhibition in inflammation processes. Upon interferon-gamma treatment assembles into the GAIT complex which binds to stem loop-containing GAIT elements in the 3'-UTR of diverse inflammatory mRNAs (such as ceruplasmin) and suppresses their translation. Also plays a role in innate immunity by promoting TNF-induced NF-kappa-B activation and type I interferon production, via interaction with TRAF2 and TRAF3, respectively. Participates in nuclear events including transcription, RNA transport, DNA replication and apoptosis. Nuclear functions are probably due to the nitrosylase activity that mediates cysteine S-nitrosylation of nuclear target proteins such as SIRT1, HDAC2 and PRKDC. The chain is Glyceraldehyde-3-phosphate dehydrogenase, muscle from Jaculus orientalis (Greater Egyptian jerboa).